A 179-amino-acid polypeptide reads, in one-letter code: Large ribosomal subunit protein uL5 (179 aa).

Belongs to the universal ribosomal protein uL5 family. In terms of assembly, part of the 50S ribosomal subunit; part of the 5S rRNA/L5/L18/L25 subcomplex. Contacts the 5S rRNA and the P site tRNA. Forms a bridge to the 30S subunit in the 70S ribosome.

This is one of the proteins that bind and probably mediate the attachment of the 5S RNA into the large ribosomal subunit, where it forms part of the central protuberance. In the 70S ribosome it contacts protein S13 of the 30S subunit (bridge B1b), connecting the 2 subunits; this bridge is implicated in subunit movement. Contacts the P site tRNA; the 5S rRNA and some of its associated proteins might help stabilize positioning of ribosome-bound tRNAs. This is Large ribosomal subunit protein uL5 from Acidovorax ebreus (strain TPSY) (Diaphorobacter sp. (strain TPSY)).